Here is a 533-residue protein sequence, read N- to C-terminus: Beta-1,2-xylosyltransferase RCN11 (533 aa).

Residues 1–23 are Cytoplasmic-facing; sequence MMPVRTYHHHHHHNNSNNHRLRR. Residues 24–44 traverse the membrane as a helical; Signal-anchor for type II membrane protein segment; that stretch reads IIPRVLLAVFAIYAVSFAAYL. Topologically, residues 45-533 are lumenal; the sequence is LRHQSPHPHP…LSNILKGFGC (489 aa). The tract at residues 51–78 is disordered; it reads HPHPHPAADPERDAVDAAGGGGGGGAVD. Over residues 56 to 65 the composition is skewed to basic and acidic residues; it reads PAADPERDAV. Residues asparagine 307 and asparagine 313 are each glycosylated (N-linked (GlcNAc...) asparagine).

It belongs to the glycosyltransferase 61 family. In terms of tissue distribution, expressed at the base of the crown roots and in the basal region of the shoot, which contains the shoot and axillary meristems.

It localises to the golgi apparatus membrane. The protein operates within glycan metabolism. Glycosyltransferase involved in the xylosylation of N-glycans. Possesses beta-1,2-xylosyltransferase activity, transferring xylose from UDP-xylose to the core beta-linked mannose of N-glycans. Beta-1,2-linked xylose residues on N-glycans are critical for seed germination and plant development and growth under conditions of abiotic stress. The chain is Beta-1,2-xylosyltransferase RCN11 from Oryza sativa subsp. japonica (Rice).